We begin with the raw amino-acid sequence, 265 residues long: Protein N-terminal and lysine N-methyltransferase EFM7 (265 aa).

Residues Trp-55, 81-83, Asp-103, Trp-141, and Ala-169 each bind S-adenosyl-L-methionine; that span reads GAA.

It belongs to the class I-like SAM-binding methyltransferase superfamily. EFM7 family.

It is found in the cytoplasm. S-adenosyl-L-methionine-dependent protein methyltransferase that trimethylates the N-terminal glycine 'Gly-2' of elongation factor 1-alpha, before also catalyzing the mono- and dimethylation of 'Lys-3'. The chain is Protein N-terminal and lysine N-methyltransferase EFM7 from Gibberella zeae (strain ATCC MYA-4620 / CBS 123657 / FGSC 9075 / NRRL 31084 / PH-1) (Wheat head blight fungus).